Reading from the N-terminus, the 190-residue chain is Potassium-transporting ATPase KdpC subunit (190 aa).

Residues 10–30 form a helical membrane-spanning segment; that stretch reads TFLFLLLITGGVYPLLTTALG.

Belongs to the KdpC family. In terms of assembly, the system is composed of three essential subunits: KdpA, KdpB and KdpC.

The protein resides in the cell inner membrane. Functionally, part of the high-affinity ATP-driven potassium transport (or Kdp) system, which catalyzes the hydrolysis of ATP coupled with the electrogenic transport of potassium into the cytoplasm. This subunit acts as a catalytic chaperone that increases the ATP-binding affinity of the ATP-hydrolyzing subunit KdpB by the formation of a transient KdpB/KdpC/ATP ternary complex. In Escherichia coli O127:H6 (strain E2348/69 / EPEC), this protein is Potassium-transporting ATPase KdpC subunit.